Here is a 513-residue protein sequence, read N- to C-terminus: ATP synthase subunit alpha (513 aa).

169–176 (GDRQTGKT) is a binding site for ATP.

Belongs to the ATPase alpha/beta chains family. F-type ATPases have 2 components, CF(1) - the catalytic core - and CF(0) - the membrane proton channel. CF(1) has five subunits: alpha(3), beta(3), gamma(1), delta(1), epsilon(1). CF(0) has three main subunits: a(1), b(2) and c(9-12). The alpha and beta chains form an alternating ring which encloses part of the gamma chain. CF(1) is attached to CF(0) by a central stalk formed by the gamma and epsilon chains, while a peripheral stalk is formed by the delta and b chains.

Its subcellular location is the cell inner membrane. It catalyses the reaction ATP + H2O + 4 H(+)(in) = ADP + phosphate + 5 H(+)(out). Produces ATP from ADP in the presence of a proton gradient across the membrane. The alpha chain is a regulatory subunit. This is ATP synthase subunit alpha from Shewanella amazonensis (strain ATCC BAA-1098 / SB2B).